The primary structure comprises 360 residues: Protein Wnt-2 (360 aa).

A signal peptide spans 1–25 (MNAPLAGIWPWLPLLLTWLAPEVSS). 11 cysteine pairs are disulfide-bonded: cysteine 76-cysteine 87, cysteine 127-cysteine 135, cysteine 137-cysteine 157, cysteine 206-cysteine 220, cysteine 208-cysteine 215, cysteine 278-cysteine 309, cysteine 294-cysteine 304, cysteine 308-cysteine 348, cysteine 324-cysteine 339, cysteine 326-cysteine 336, and cysteine 331-cysteine 332. Serine 212 carries O-palmitoleoyl serine; by PORCN lipidation. Asparagine 295 is a glycosylation site (N-linked (GlcNAc...) asparagine).

The protein belongs to the Wnt family. In terms of processing, palmitoleoylation is required for efficient binding to frizzled receptors. Depalmitoleoylation leads to Wnt signaling pathway inhibition.

The protein resides in the secreted. It localises to the extracellular space. Its subcellular location is the extracellular matrix. In terms of biological role, ligand for members of the frizzled family of seven transmembrane receptors. Functions in the canonical Wnt signaling pathway that results in activation of transcription factors of the TCF/LEF family. Functions as a upstream regulator of FGF10 expression. Plays an important role in embryonic lung development. May contribute to embryonic brain development by regulating the proliferation of dopaminergic precursors and neurons. The chain is Protein Wnt-2 (WNT2) from Loxodonta africana (African elephant).